Consider the following 33-residue polypeptide: MATLDFTTKPLALVIYMSVVLLLMVGVPLLFSS.

The chain crosses the membrane as a helical span at residues 11–31 (LALVIYMSVVLLLMVGVPLLF).

It localises to the membrane. This is an uncharacterized protein from Saccharomyces cerevisiae (strain ATCC 204508 / S288c) (Baker's yeast).